Consider the following 395-residue polypeptide: Protein phosphatase methylesterase 1 (395 aa).

Active-site residues include S194, D222, and H348.

Belongs to the AB hydrolase superfamily.

The enzyme catalyses [phosphatase 2A protein]-C-terminal L-leucine methyl ester + H2O = [phosphatase 2A protein]-C-terminal L-leucine + methanol + H(+). In terms of biological role, demethylates proteins that have been reversibly carboxymethylated. Demethylates the phosphatase PP2A catalytic subunit. This is Protein phosphatase methylesterase 1 (PPE1) from Kluyveromyces lactis (strain ATCC 8585 / CBS 2359 / DSM 70799 / NBRC 1267 / NRRL Y-1140 / WM37) (Yeast).